The sequence spans 502 residues: MSIRAEEISALIKQQIENYESQIQVSDVGTVIQVGDGIARAHGLDNVMSGEAVEFANAVMGMALNLEENNVGIVILGPYTGIKEGDEVRRTGRIMEVPVGETLIGRVVNPLGQPVDGLGPVETTETRPIESRAPGVMDRRSVHEPLQTGIKAIDALVPIGRGQRELIIGDRQTGKTSVAIDTIINQKDQNMICIYVAIGQKESTVATVVETLAKHGAPDYTIVVTASASQPAPLLFLAPYAGVAMGEYFMIMGKHVLVVIDDLSKQAAAYRQLSLLLRRPPGREAYPGDIFYLHSRLLERAAKLSDAKGGGSLTALPFVETQAGDISAYIPTNVISITDGQIFLQSDLFFSGVRPAINAGLSVSRVGGAAQIKAMKKVAGTLRLDLAAYRELEAFAQFGSDLDKATQANVARGARTVEVLKQDLHQPIPVEKQVLIIYALTRGFLDDIPVEDVRRFEKEFYLWLDQNGQHLLEHIRTTKDLPNEDDLNQAIEAFKKTFVVSQ.

Residue 169–176 coordinates ATP; that stretch reads GDRQTGKT.

This sequence belongs to the ATPase alpha/beta chains family. F-type ATPases have 2 components, CF(1) - the catalytic core - and CF(0) - the membrane proton channel. CF(1) has five subunits: alpha(3), beta(3), gamma(1), delta(1), epsilon(1). CF(0) has three main subunits: a(1), b(2) and c(9-12). The alpha and beta chains form an alternating ring which encloses part of the gamma chain. CF(1) is attached to CF(0) by a central stalk formed by the gamma and epsilon chains, while a peripheral stalk is formed by the delta and b chains.

The protein resides in the cell membrane. It carries out the reaction ATP + H2O + 4 H(+)(in) = ADP + phosphate + 5 H(+)(out). Functionally, produces ATP from ADP in the presence of a proton gradient across the membrane. The alpha chain is a regulatory subunit. This is ATP synthase subunit alpha from Bacillus sp. (strain PS3).